The chain runs to 100 residues: Large ribosomal subunit protein bL27 (100 aa).

Residues 1–9 constitute a propeptide that is removed on maturation; sequence MLVMNLQLF.

This sequence belongs to the bacterial ribosomal protein bL27 family. In terms of processing, the N-terminus is cleaved by ribosomal processing cysteine protease Prp.

This chain is Large ribosomal subunit protein bL27, found in Clostridium botulinum (strain Hall / ATCC 3502 / NCTC 13319 / Type A).